We begin with the raw amino-acid sequence, 79 residues long: Sec-independent protein translocase protein TatA (79 aa).

A helical membrane pass occupies residues Met1–Phe21. The tract at residues Glu48–Gly79 is disordered. Positions Lys66–Gly79 are enriched in basic and acidic residues.

The protein belongs to the TatA/E family. As to quaternary structure, the Tat system comprises two distinct complexes: a TatABC complex, containing multiple copies of TatA, TatB and TatC subunits, and a separate TatA complex, containing only TatA subunits. Substrates initially bind to the TatABC complex, which probably triggers association of the separate TatA complex to form the active translocon.

Its subcellular location is the cell inner membrane. In terms of biological role, part of the twin-arginine translocation (Tat) system that transports large folded proteins containing a characteristic twin-arginine motif in their signal peptide across membranes. TatA could form the protein-conducting channel of the Tat system. The chain is Sec-independent protein translocase protein TatA from Helicobacter acinonychis (strain Sheeba).